A 484-amino-acid polypeptide reads, in one-letter code: Glycogen synthase (484 aa).

An ADP-alpha-D-glucose-binding site is contributed by Lys-20.

The protein belongs to the glycosyltransferase 1 family. Bacterial/plant glycogen synthase subfamily.

It catalyses the reaction [(1-&gt;4)-alpha-D-glucosyl](n) + ADP-alpha-D-glucose = [(1-&gt;4)-alpha-D-glucosyl](n+1) + ADP + H(+). It participates in glycan biosynthesis; glycogen biosynthesis. In terms of biological role, synthesizes alpha-1,4-glucan chains using ADP-glucose. This chain is Glycogen synthase, found in Vibrio atlanticus (strain LGP32) (Vibrio splendidus (strain Mel32)).